A 159-amino-acid polypeptide reads, in one-letter code: Phosphodiesterase delta-like protein (159 aa).

This sequence belongs to the PDE6D/unc-119 family.

The chain is Phosphodiesterase delta-like protein (pdl-1) from Caenorhabditis elegans.